The primary structure comprises 360 residues: Uroporphyrinogen decarboxylase (360 aa).

Residues 31 to 35 (RQAGR), Asp-81, Tyr-157, Thr-212, and His-333 contribute to the substrate site.

Belongs to the uroporphyrinogen decarboxylase family. As to quaternary structure, homodimer.

The protein localises to the cytoplasm. It catalyses the reaction uroporphyrinogen III + 4 H(+) = coproporphyrinogen III + 4 CO2. The protein operates within porphyrin-containing compound metabolism; protoporphyrin-IX biosynthesis; coproporphyrinogen-III from 5-aminolevulinate: step 4/4. Catalyzes the decarboxylation of four acetate groups of uroporphyrinogen-III to yield coproporphyrinogen-III. This is Uroporphyrinogen decarboxylase from Herminiimonas arsenicoxydans.